Reading from the N-terminus, the 223-residue chain is Uracil-DNA glycosylase (223 aa).

Asp61 acts as the Proton acceptor in catalysis.

The protein belongs to the uracil-DNA glycosylase (UDG) superfamily. UNG family.

The protein resides in the cytoplasm. It carries out the reaction Hydrolyzes single-stranded DNA or mismatched double-stranded DNA and polynucleotides, releasing free uracil.. Functionally, excises uracil residues from the DNA which can arise as a result of misincorporation of dUMP residues by DNA polymerase or due to deamination of cytosine. This chain is Uracil-DNA glycosylase, found in Tolumonas auensis (strain DSM 9187 / NBRC 110442 / TA 4).